The primary structure comprises 739 residues: Photosystem I P700 chlorophyll a apoprotein A1 (739 aa).

Transmembrane regions (helical) follow at residues 61–84 (IFSA…FHGA), 147–170 (LYVT…FHYH), 186–210 (MNHH…HVSL), 281–299 (VAHH…GHMY), 336–359 (WHAQ…HHMY), 375–401 (LSLF…IFMV), 423–445 (AIIS…LYIH), and 520–538 (FMVH…LILL). Positions 562 and 571 each coordinate [4Fe-4S] cluster. Helical transmembrane passes span 578–599 (HVFL…HFSW) and 653–675 (LSAY…MFLF). Residue His664 participates in chlorophyll a' binding. Met672 and Tyr680 together coordinate chlorophyll a. Phylloquinone is bound at residue Trp681. A helical membrane pass occupies residues 713–733 (AVGVAHYLLGGIVTTWAFFLA).

It belongs to the PsaA/PsaB family. As to quaternary structure, the PsaA/B heterodimer binds the P700 chlorophyll special pair and subsequent electron acceptors. PSI consists of a core antenna complex that captures photons, and an electron transfer chain that converts photonic excitation into a charge separation. The cyanobacterial PSI reaction center is composed of one copy each of PsaA,B,C,D,E,F,I,J,K,L,M and X, and forms trimeric complexes. The cofactor is PSI electron transfer chain: 5 chlorophyll a, 1 chlorophyll a', 2 phylloquinones and 3 4Fe-4S clusters. PSI core antenna: 90 chlorophyll a, 22 carotenoids, 3 phospholipids and 1 galactolipid. P700 is a chlorophyll a/chlorophyll a' dimer, A0 is one or more chlorophyll a, A1 is one or both phylloquinones and FX is a shared 4Fe-4S iron-sulfur center..

It is found in the cellular thylakoid membrane. It carries out the reaction reduced [plastocyanin] + hnu + oxidized [2Fe-2S]-[ferredoxin] = oxidized [plastocyanin] + reduced [2Fe-2S]-[ferredoxin]. Functionally, psaA and PsaB bind P700, the primary electron donor of photosystem I (PSI), as well as the electron acceptors A0, A1 and FX. PSI is a plastocyanin/cytochrome c6-ferredoxin oxidoreductase, converting photonic excitation into a charge separation, which transfers an electron from the donor P700 chlorophyll pair to the spectroscopically characterized acceptors A0, A1, FX, FA and FB in turn. Oxidized P700 is reduced on the lumenal side of the thylakoid membrane by plastocyanin or cytochrome c6. The polypeptide is Photosystem I P700 chlorophyll a apoprotein A1 (Picosynechococcus sp. (strain ATCC 27264 / PCC 7002 / PR-6) (Agmenellum quadruplicatum)).